The sequence spans 425 residues: MIDLKLLREDPDAVRRSQQSRGEDPSLVDALLAADAARRAAISTADTLRAEQKSASKSVGAASPEQRPALLARAKELAEQVKAAETAQAEAEAAFTAAHLAISNVVIDGVPAGGEDDFAVLDVVGEPTALENPRDHLELGESLGLIDMARGAKVSGSRFYFLTGKGALLQLGLLQLALRLAVENGFVPMIPPVLVRPEVMAGTGFLGAHAEEVYRIEADDLYLVGTSEVPLAGYHADEILDLSAGPLRYAGWSSCFRREAGSYGKDTRGVIRVHQFDKVEGFVYCTPADAEAEHQRLLGWQREMLARIEVPYRVIDVAAGDLGSSAARKFDCEAWVPTQQTYRELTSTSNCTTFQARRLSTRYRDGGDAKGKPQIAATLNGTLGTTRWLVAILENHQRPDGSVRVPEALVPFVGTELLEPVGPRG.

L-serine is bound at residue 226 to 228 (TSE). ATP contacts are provided by residues 257-259 (RRE) and Val-273. Glu-280 contacts L-serine. 344–347 (ELTS) contributes to the ATP binding site. Thr-382 is a binding site for L-serine.

This sequence belongs to the class-II aminoacyl-tRNA synthetase family. Type-1 seryl-tRNA synthetase subfamily. Homodimer. The tRNA molecule binds across the dimer.

The protein localises to the cytoplasm. It catalyses the reaction tRNA(Ser) + L-serine + ATP = L-seryl-tRNA(Ser) + AMP + diphosphate + H(+). It carries out the reaction tRNA(Sec) + L-serine + ATP = L-seryl-tRNA(Sec) + AMP + diphosphate + H(+). It participates in aminoacyl-tRNA biosynthesis; selenocysteinyl-tRNA(Sec) biosynthesis; L-seryl-tRNA(Sec) from L-serine and tRNA(Sec): step 1/1. Functionally, catalyzes the attachment of serine to tRNA(Ser). Is also able to aminoacylate tRNA(Sec) with serine, to form the misacylated tRNA L-seryl-tRNA(Sec), which will be further converted into selenocysteinyl-tRNA(Sec). The chain is Serine--tRNA ligase from Mycobacterium avium (strain 104).